The sequence spans 107 residues: L-amino-acid oxidase (107 aa).

An FAD-binding site is contributed by 35–38; it reads GPMR. The substrate site is built by arginine 38 and histidine 49.

It belongs to the flavin monoamine oxidase family. FIG1 subfamily. In terms of assembly, homodimer; non-covalently linked. FAD serves as cofactor. N-glycosylated. As to expression, expressed by the venom gland.

It localises to the secreted. It catalyses the reaction an L-alpha-amino acid + O2 + H2O = a 2-oxocarboxylate + H2O2 + NH4(+). It carries out the reaction L-leucine + O2 + H2O = 4-methyl-2-oxopentanoate + H2O2 + NH4(+). The catalysed reaction is L-phenylalanine + O2 + H2O = 3-phenylpyruvate + H2O2 + NH4(+). The enzyme catalyses L-tryptophan + O2 + H2O = indole-3-pyruvate + H2O2 + NH4(+). It catalyses the reaction L-methionine + O2 + H2O = 4-methylsulfanyl-2-oxobutanoate + H2O2 + NH4(+). It carries out the reaction L-isoleucine + O2 + H2O = (S)-3-methyl-2-oxopentanoate + H2O2 + NH4(+). The catalysed reaction is L-arginine + O2 + H2O = 5-guanidino-2-oxopentanoate + H2O2 + NH4(+). The enzyme catalyses L-histidine + O2 + H2O = 3-(imidazol-5-yl)pyruvate + H2O2 + NH4(+). Catalyzes an oxidative deamination of predominantly hydrophobic and aromatic L-amino acids, thus producing hydrogen peroxide that may contribute to the diverse toxic effects of this enzyme. Shows high activity on L-Met, moderate activity on L-Trp, L-Leu, L-His, L-Phe, L-Arg, L-Ile, low activity on L-Val, L-Glu, L-Lys, L-Gln, L-Asn, L-Tyr, L-Ala, and no activity on L-Asp, L-Ser, L-Pro, L-Gly, L-Thr and L-Cys. Shows antimicrobial activity inhibiting the growth of both Gram-negative and Gram-positive bacteria. Also inhibits platelet aggregation induced by ADP or collagen. Effects of snake L-amino oxidases on platelets are controversial, since they either induce aggregation or inhibit agonist-induced aggregation. These different effects are probably due to different experimental conditions. This protein may also induce hemorrhage, hemolysis, edema, apoptosis, and have antiparasitic activities. In Macrovipera lebetinus (Levantine viper), this protein is L-amino-acid oxidase.